The chain runs to 375 residues: Chaperone protein DnaJ (375 aa).

One can recognise a J domain in the interval 5–70 (DYYEVLGVAR…NKRRAYDAHG (66 aa)). The CR-type zinc finger occupies 131–208 (GIERRIEIPT…CHGAGRVEED (78 aa)). The Zn(2+) site is built by cysteine 144, cysteine 147, cysteine 160, cysteine 163, cysteine 182, cysteine 185, cysteine 196, and cysteine 199. CXXCXGXG motif repeat units lie at residues 144 to 151 (CAPCHGSG), 160 to 167 (CGTCHGRG), 182 to 189 (CPHCDGRG), and 196 to 203 (CKTCHGAG).

Belongs to the DnaJ family. Homodimer. Zn(2+) serves as cofactor.

It is found in the cytoplasm. Participates actively in the response to hyperosmotic and heat shock by preventing the aggregation of stress-denatured proteins and by disaggregating proteins, also in an autonomous, DnaK-independent fashion. Unfolded proteins bind initially to DnaJ; upon interaction with the DnaJ-bound protein, DnaK hydrolyzes its bound ATP, resulting in the formation of a stable complex. GrpE releases ADP from DnaK; ATP binding to DnaK triggers the release of the substrate protein, thus completing the reaction cycle. Several rounds of ATP-dependent interactions between DnaJ, DnaK and GrpE are required for fully efficient folding. Also involved, together with DnaK and GrpE, in the DNA replication of plasmids through activation of initiation proteins. This chain is Chaperone protein DnaJ, found in Xanthomonas axonopodis pv. citri (strain 306).